A 1089-amino-acid polypeptide reads, in one-letter code: Ankyrin repeat and IBR domain-containing protein 1 (1089 aa).

Gly-2 is lipidated: N-myristoyl glycine. 2 ANK repeats span residues 45–74 (QHNT…NPNK) and 144–173 (KKNT…DLFA). The interval 281 to 321 (CQRSGVQMPTPPPSGYNAWDTLPSPRTPRTTRSSVTSPDEI) is disordered. A compositionally biased stretch (low complexity) spans 303-318 (PSPRTPRTTRSSVTSP). The tract at residues 329-569 (DTSLCDICMC…GGYYRCTRYE (241 aa)) is TRIAD supradomain. Zn(2+) is bound by residues Cys-333, Cys-336, Cys-351, His-353, Cys-356, Cys-359, Cys-378, Cys-383, Cys-465, Cys-468, His-473, Cys-478, Cys-519, and Cys-522. The segment at 333 to 383 (CDICMCSISVFEDPVDMPCGHDFCRGCWESFLNLKIQEGEAHNIFCPAYDC) adopts an RING-type 1 zinc-finger fold. Residues 401 to 478 (DKRYLQFDIK…LGEAHEPCDC (78 aa)) form an IBR-type zinc finger. The RING-type 2; atypical zinc-finger motif lies at 519–548 (CANCKSPIQKNEGCNHMQCAKCKYDFCWIC). The active site involves Cys-532. 6 residues coordinate Zn(2+): Cys-537, Cys-540, Cys-545, Cys-548, His-555, and Cys-565. The stretch at 575–640 (EEQSKEMTVE…RALKETEGGC (66 aa)) forms a coiled coil. Ser-737 is modified (phosphoserine). Residues 776–821 (RRGDVHSLLSNPPDPDEPSESTLDIPEGGSSSRRPGTSVVSSASMS) form a disordered region. The 20-residue stretch at 851–870 (EDDPNILLAIQLSLQESGLA) folds into the UIM domain. Ser-884 and Ser-911 each carry phosphoserine. Disordered stretches follow at residues 889-912 (GTSL…ALSS), 927-964 (AEND…QDPN), and 1026-1089 (DASV…VHLV). Polar residues-rich tracts occupy residues 931-941 (PFSTDTLSSHP) and 1070-1082 (DVSS…SSDW).

It belongs to the RBR family.

The catalysed reaction is [E2 ubiquitin-conjugating enzyme]-S-ubiquitinyl-L-cysteine + [acceptor protein]-L-lysine = [E2 ubiquitin-conjugating enzyme]-L-cysteine + [acceptor protein]-N(6)-ubiquitinyl-L-lysine.. Might act as an E3 ubiquitin-protein ligase, or as part of E3 complex, which accepts ubiquitin from specific E2 ubiquitin-conjugating enzymes and then transfers it to substrates. The chain is Ankyrin repeat and IBR domain-containing protein 1 (ANKIB1) from Homo sapiens (Human).